A 463-amino-acid polypeptide reads, in one-letter code: Retinoic acid receptor RXR-gamma (463 aa).

A modulating region spans residues 1–138 (MYGNYSHFMK…TSPGSLVKHI (138 aa)). The segment at 16 to 53 (GGSPGHTGSTSMSPSVALPTGKPMDSHPSYTDTPVSAP) is disordered. 2 NR C4-type zinc fingers span residues 139-159 (CAIC…CEGC) and 175-199 (CRDN…YQKC). Residues 139 to 204 (CAICGDRSSG…RYQKCLVMGM (66 aa)) constitute a DNA-binding region (nuclear receptor). The segment at 205 to 230 (KREAVQEERQRSRERAESEAECASSS) is hinge. Positions 211–222 (EERQRSRERAES) are enriched in basic and acidic residues. Residues 211 to 232 (EERQRSRERAESEAECASSSHE) form a disordered region. In terms of domain architecture, NR LBD spans 231-459 (HEDMPVERIL…SFLMEMLETP (229 aa)).

The protein belongs to the nuclear hormone receptor family. NR2 subfamily. As to quaternary structure, homodimer. Heterodimer with a RAR molecule. Binds DNA preferentially as a RAR/RXR heterodimer. Interacts with RARA. Acetylated by EP300.

The protein resides in the nucleus. It localises to the cytoplasm. In terms of biological role, receptor for retinoic acid. Retinoic acid receptors bind as heterodimers to their target response elements in response to their ligands, all-trans or 9-cis retinoic acid, and regulate gene expression in various biological processes. The RAR/RXR heterodimers bind to the retinoic acid response elements (RARE) composed of tandem 5'-AGGTCA-3' sites known as DR1-DR5. The high affinity ligand for RXRs is 9-cis retinoic acid. This Mus musculus (Mouse) protein is Retinoic acid receptor RXR-gamma (Rxrg).